The following is a 153-amino-acid chain: Small ribosomal subunit protein bS16 (153 aa).

Positions 130–153 (EAEAAAAAEEAPAEEAAEEAPAEA) are disordered. Positions 140 to 153 (APAEEAAEEAPAEA) are enriched in acidic residues.

Belongs to the bacterial ribosomal protein bS16 family.

The protein is Small ribosomal subunit protein bS16 of Bifidobacterium longum (strain NCC 2705).